The chain runs to 150 residues: Ribosome maturation factor RimP (150 aa).

The protein belongs to the RimP family.

The protein localises to the cytoplasm. In terms of biological role, required for maturation of 30S ribosomal subunits. In Thermotoga maritima (strain ATCC 43589 / DSM 3109 / JCM 10099 / NBRC 100826 / MSB8), this protein is Ribosome maturation factor RimP.